Consider the following 200-residue polypeptide: NADH-quinone oxidoreductase subunit C (200 aa).

Belongs to the complex I 30 kDa subunit family. NDH-1 is composed of 14 different subunits. Subunits NuoB, C, D, E, F, and G constitute the peripheral sector of the complex.

The protein resides in the cell inner membrane. It catalyses the reaction a quinone + NADH + 5 H(+)(in) = a quinol + NAD(+) + 4 H(+)(out). NDH-1 shuttles electrons from NADH, via FMN and iron-sulfur (Fe-S) centers, to quinones in the respiratory chain. The immediate electron acceptor for the enzyme in this species is believed to be ubiquinone. Couples the redox reaction to proton translocation (for every two electrons transferred, four hydrogen ions are translocated across the cytoplasmic membrane), and thus conserves the redox energy in a proton gradient. In Burkholderia thailandensis (strain ATCC 700388 / DSM 13276 / CCUG 48851 / CIP 106301 / E264), this protein is NADH-quinone oxidoreductase subunit C.